A 131-amino-acid polypeptide reads, in one-letter code: Probable lactoylglutathione lyase (131 aa).

In terms of domain architecture, VOC spans 2 to 126; sequence FLLHTMIRVG…DGYKIELIQT (125 aa). Residue His-5 participates in Ni(2+) binding. Arg-9 is a substrate binding site. Glu-56 is a Ni(2+) binding site. Substrate-binding residues include Asn-60 and His-74. 2 residues coordinate Ni(2+): His-74 and Glu-122. The active-site Proton donor/acceptor is Glu-122.

This sequence belongs to the glyoxalase I family. The cofactor is Ni(2+).

It catalyses the reaction (R)-S-lactoylglutathione = methylglyoxal + glutathione. It functions in the pathway secondary metabolite metabolism; methylglyoxal degradation; (R)-lactate from methylglyoxal: step 1/2. Its function is as follows. Catalyzes the conversion of hemimercaptal, formed from methylglyoxal and glutathione, to S-lactoylglutathione. In Synechocystis sp. (strain ATCC 27184 / PCC 6803 / Kazusa), this protein is Probable lactoylglutathione lyase (gloA).